The primary structure comprises 93 residues: Small ribosomal subunit protein bS16 (93 aa).

The protein belongs to the bacterial ribosomal protein bS16 family.

The protein is Small ribosomal subunit protein bS16 of Roseiflexus castenholzii (strain DSM 13941 / HLO8).